The sequence spans 129 residues: Small ribosomal subunit protein uS8 (129 aa).

This sequence belongs to the universal ribosomal protein uS8 family. Part of the 30S ribosomal subunit.

In terms of biological role, one of the primary rRNA binding proteins, it binds directly to 16S rRNA central domain where it helps coordinate assembly of the platform of the 30S subunit. The polypeptide is Small ribosomal subunit protein uS8 (Picrophilus torridus (strain ATCC 700027 / DSM 9790 / JCM 10055 / NBRC 100828 / KAW 2/3)).